A 342-amino-acid chain; its full sequence is uncharacterized protein (342 aa).

This sequence belongs to the cycloisomerase 2 family.

This is an uncharacterized protein from Staphylococcus epidermidis (strain ATCC 12228 / FDA PCI 1200).